We begin with the raw amino-acid sequence, 142 residues long: Large ribosomal subunit protein uL13 (142 aa).

The protein belongs to the universal ribosomal protein uL13 family. Part of the 50S ribosomal subunit.

This protein is one of the early assembly proteins of the 50S ribosomal subunit, although it is not seen to bind rRNA by itself. It is important during the early stages of 50S assembly. In Xanthomonas campestris pv. campestris (strain ATCC 33913 / DSM 3586 / NCPPB 528 / LMG 568 / P 25), this protein is Large ribosomal subunit protein uL13.